Consider the following 262-residue polypeptide: Small ribosomal subunit protein eS4x (262 aa).

Residues 42-104 (LPLVLIIRNR…TNENFRLLYD (63 aa)) form the S4 RNA-binding domain.

This sequence belongs to the eukaryotic ribosomal protein eS4 family.

The protein localises to the cytoplasm. The polypeptide is Small ribosomal subunit protein eS4x (RPS4D) (Arabidopsis thaliana (Mouse-ear cress)).